A 178-amino-acid chain; its full sequence is Gamma-crystallin S (178 aa).

The residue at position 2 (Ser2) is an N-acetylserine. Positions Ser2–Gly5 are N-terminal arm. 2 Beta/gamma crystallin 'Greek key' domains span residues Ala6–Gly44 and Gly45–His87. The segment at Leu88–Gln93 is connecting peptide. Beta/gamma crystallin 'Greek key' domains follow at residues Tyr94–Glu134 and Gly135–Val177.

It belongs to the beta/gamma-crystallin family. As to quaternary structure, monomer.

In terms of biological role, crystallins are the dominant structural components of the vertebrate eye lens. The polypeptide is Gamma-crystallin S (Crygs) (Rattus norvegicus (Rat)).